Here is a 246-residue protein sequence, read N- to C-terminus: Probable transcriptional regulatory protein Rmag_0394 (246 aa).

Belongs to the TACO1 family.

The protein resides in the cytoplasm. The protein is Probable transcriptional regulatory protein Rmag_0394 of Ruthia magnifica subsp. Calyptogena magnifica.